A 400-amino-acid chain; its full sequence is Sensory histidine kinase/phosphatase NtrB (400 aa).

Composition is skewed to low complexity over residues 1–10 (MARASAAAPL) and 18–27 (RAPSSSYRPV). The interval 1–27 (MARASAAAPLPRRPARPRAPSSSYRPV) is disordered. A PAS domain is found at 29 to 99 (PCIDPSVMLN…IEQVQQGRHR (71 aa)). The region spanning 163–381 (MLGHEVKNPL…VFKVSLPMFD (219 aa)) is the Histidine kinase domain. His166 carries the phosphohistidine; by autocatalysis modification.

Autophosphorylated.

The protein localises to the cytoplasm. The enzyme catalyses ATP + protein L-histidine = ADP + protein N-phospho-L-histidine.. Its function is as follows. Member of the two-component regulatory system NtrB/NtrC, which controls expression of the nitrogen-regulated (ntr) genes in response to nitrogen limitation. Under conditions of nitrogen limitation, NtrB autophosphorylates and transfers the phosphoryl group to NtrC. In the presence of nitrogen, acts as a phosphatase that dephosphorylates and inactivates NtrC. This Azospirillum brasilense protein is Sensory histidine kinase/phosphatase NtrB.